The sequence spans 97 residues: Co-chaperonin GroES (97 aa).

It belongs to the GroES chaperonin family. Heptamer of 7 subunits arranged in a ring. Interacts with the chaperonin GroEL.

It localises to the cytoplasm. Functionally, together with the chaperonin GroEL, plays an essential role in assisting protein folding. The GroEL-GroES system forms a nano-cage that allows encapsulation of the non-native substrate proteins and provides a physical environment optimized to promote and accelerate protein folding. GroES binds to the apical surface of the GroEL ring, thereby capping the opening of the GroEL channel. The protein is Co-chaperonin GroES of Buchnera aphidicola subsp. Tuberolachnus salignus.